The chain runs to 157 residues: Methylamine utilization protein MauL (157 aa).

It participates in one-carbon metabolism; methylamine degradation. Its function is as follows. Probably involved in TTQ prosthetic group biosynthesis. The protein is Methylamine utilization protein MauL (mauL) of Methylobacillus flagellatus (strain ATCC 51484 / DSM 6875 / VKM B-1610 / KT).